A 390-amino-acid chain; its full sequence is Chorismate synthase (390 aa).

Arginine 48 serves as a coordination point for NADP(+). FMN-binding positions include arginine 126–serine 128, glycine 286, lysine 301–serine 305, and arginine 328.

It belongs to the chorismate synthase family. FMNH2 is required as a cofactor.

The enzyme catalyses 5-O-(1-carboxyvinyl)-3-phosphoshikimate = chorismate + phosphate. It functions in the pathway metabolic intermediate biosynthesis; chorismate biosynthesis; chorismate from D-erythrose 4-phosphate and phosphoenolpyruvate: step 7/7. Catalyzes the anti-1,4-elimination of the C-3 phosphate and the C-6 proR hydrogen from 5-enolpyruvylshikimate-3-phosphate (EPSP) to yield chorismate, which is the branch point compound that serves as the starting substrate for the three terminal pathways of aromatic amino acid biosynthesis. This reaction introduces a second double bond into the aromatic ring system. The sequence is that of Chorismate synthase from Sulfurisphaera tokodaii (strain DSM 16993 / JCM 10545 / NBRC 100140 / 7) (Sulfolobus tokodaii).